Here is a 181-residue protein sequence, read N- to C-terminus: Adenylate kinase (181 aa).

Residue 10–15 coordinates ATP; the sequence is GAGKGT. The segment at 30 to 59 is NMP; the sequence is STGDLFRSNISEGTELGLQAKQYLDAGDLV. AMP-binding positions include T31, R36, 57–59, 85–88, and Q92; these read DLV and GFPR. The interval 126-132 is LID; it reads GRGRADD. R127 contributes to the ATP binding site. 2 residues coordinate AMP: R129 and R140. G166 provides a ligand contact to ATP.

It belongs to the adenylate kinase family. As to quaternary structure, monomer.

It localises to the cytoplasm. It catalyses the reaction AMP + ATP = 2 ADP. The protein operates within purine metabolism; AMP biosynthesis via salvage pathway; AMP from ADP: step 1/1. In terms of biological role, catalyzes the reversible transfer of the terminal phosphate group between ATP and AMP. Plays an important role in cellular energy homeostasis and in adenine nucleotide metabolism. The polypeptide is Adenylate kinase (Mycobacteroides abscessus (strain ATCC 19977 / DSM 44196 / CCUG 20993 / CIP 104536 / JCM 13569 / NCTC 13031 / TMC 1543 / L948) (Mycobacterium abscessus)).